Consider the following 854-residue polypeptide: Glucans biosynthesis glucosyltransferase H (854 aa).

The next 7 membrane-spanning stretches (helical) occupy residues 155 to 175 (ILLALTLFQTAIATWYMKTIL), 209 to 229 (ILVLFAVLFCWVSAGFWTALM), 528 to 548 (VFLTGVMSYLSAPLWFMFLVL), 583 to 603 (IALFSTTLVLLFLPKLLSVIL), 619 to 639 (FLSLLLEMLFSVLLAPVRMLF), 671 to 691 (FVRHGSQLILGLVWAIGMAWL), and 695 to 715 (FLWWLSPIVFSLILSPVVSVY).

The protein belongs to the glycosyltransferase 2 family. OpgH subfamily.

It localises to the cell inner membrane. It functions in the pathway glycan metabolism; osmoregulated periplasmic glucan (OPG) biosynthesis. In terms of biological role, involved in the biosynthesis of osmoregulated periplasmic glucans (OPGs). The chain is Glucans biosynthesis glucosyltransferase H from Pectobacterium atrosepticum (strain SCRI 1043 / ATCC BAA-672) (Erwinia carotovora subsp. atroseptica).